The primary structure comprises 93 residues: Small ribosomal subunit protein uS19c (93 aa).

It belongs to the universal ribosomal protein uS19 family.

Its subcellular location is the plastid. It localises to the chloroplast. Functionally, protein S19 forms a complex with S13 that binds strongly to the 16S ribosomal RNA. The chain is Small ribosomal subunit protein uS19c from Stigeoclonium helveticum (Green alga).